The sequence spans 482 residues: Probable 2-carboxy-D-arabinitol-1-phosphatase (482 aa).

Residues 1–34 (MISLPLTTPILPSRCLLHKTRRQNSTRRRLLIRS) constitute a chloroplast transit peptide. The Tele-phosphohistidine intermediate role is filled by His55. Glu129 acts as the Proton donor/acceptor in catalysis.

This sequence belongs to the phosphoglycerate mutase family.

It localises to the plastid. Its subcellular location is the chloroplast stroma. It carries out the reaction 2-carboxy-D-arabinitol 1-phosphate + H2O = 2-carboxy-D-arabinitol + phosphate. Phosphoglycerate mutase-like protein lacking PGM activity, but having 2-carboxy-D-arabinitol 1-phosphate (CA1P) phosphatase activity. Prevents the accumulation of D-glycero-2,3-pentodiulose-1,5-bisphosphate (PDBP) a potent inhibitor of ribulose-1,5-bisphosphate carboxylase (RuBisCO). PDBP is produced during the oxidation of ribulose-1,5-bisphosphate, the substrate of RuBisCO. This Arabidopsis thaliana (Mouse-ear cress) protein is Probable 2-carboxy-D-arabinitol-1-phosphatase.